The following is a 205-amino-acid chain: Proteasome subunit beta (205 aa).

A propeptide spans 1 to 9 (MNQTENMEG) (removed in mature form; by autocatalysis). Thr10 serves as the catalytic Nucleophile.

It belongs to the peptidase T1B family. As to quaternary structure, the 20S proteasome core is composed of 14 alpha and 14 beta subunits that assemble into four stacked heptameric rings, resulting in a barrel-shaped structure. The two inner rings, each composed of seven catalytic beta subunits, are sandwiched by two outer rings, each composed of seven alpha subunits. The catalytic chamber with the active sites is on the inside of the barrel. Has a gated structure, the ends of the cylinder being occluded by the N-termini of the alpha-subunits. Is capped at one or both ends by the proteasome regulatory ATPase, PAN.

It localises to the cytoplasm. It carries out the reaction Cleavage of peptide bonds with very broad specificity.. The formation of the proteasomal ATPase PAN-20S proteasome complex, via the docking of the C-termini of PAN into the intersubunit pockets in the alpha-rings, triggers opening of the gate for substrate entry. Interconversion between the open-gate and close-gate conformations leads to a dynamic regulation of the 20S proteasome proteolysis activity. In terms of biological role, component of the proteasome core, a large protease complex with broad specificity involved in protein degradation. This Methanosphaera stadtmanae (strain ATCC 43021 / DSM 3091 / JCM 11832 / MCB-3) protein is Proteasome subunit beta.